Consider the following 564-residue polypeptide: Dihydropyrimidinase-related protein 5 (564 aa).

Thr-509 and Thr-514 each carry phosphothreonine. Ser-532 and Ser-538 each carry phosphoserine. At Arg-559 the chain carries Omega-N-methylarginine.

The protein belongs to the metallo-dependent hydrolases superfamily. Hydantoinase/dihydropyrimidinase family. Homotetramer, and heterotetramer with other DPYS-like proteins. Interacts with DPYSL2, DPYSL3 and DPYSL4. Interacts with MAP2 and TUBB3. As to expression, highly expressed in embryonic and early postnatal brain and spinal cord.

The protein localises to the cytoplasm. In terms of biological role, involved in the negative regulation of dendrite outgrowth. In Rattus norvegicus (Rat), this protein is Dihydropyrimidinase-related protein 5 (Dpysl5).